Consider the following 190-residue polypeptide: (S)-2-hydroxypropylphosphonic acid epoxidase (190 aa).

Positions lysine 10–phenylalanine 60 constitute an HTH cro/C1-type domain. A DNA-binding region (H-T-H motif) is located at residues arginine 20–aspartate 40. Substrate contacts are provided by residues arginine 87, tyrosine 95, asparagine 125–histidine 128, and glutamate 132. 3 residues coordinate Fe cation: histidine 128, glutamate 132, and histidine 171. The 49-residue stretch at histidine 128–histidine 176 folds into the Cupin type-2 domain.

It belongs to the non-heme iron-dependent dioxygenase family. Homotrimer. It depends on Fe(2+) as a cofactor.

It catalyses the reaction (S)-2-hydroxypropylphosphonate + H2O2 = (1R,2S)-epoxypropylphosphonate + 2 H2O. It participates in antibiotic biosynthesis; fosfomycin biosynthesis. Its function is as follows. Non-heme-dependent dioxygenase that catalyzes the oxidative epoxidation of (S)-2-hydroxypropylphosphonate into (1R,2S)-epoxypropylphosphonate, the final step in the biosynthesis of fosfomycin antibiotic. This chain is (S)-2-hydroxypropylphosphonic acid epoxidase (hppE), found in Pseudomonas syringae.